The chain runs to 321 residues: Phosphoenolpyruvate transferase (321 aa).

Residue D51 coordinates 7,8-didemethyl-8-hydroxy-5-deazariboflavin.

The protein belongs to the CofD family. Homodimer. Mg(2+) is required as a cofactor.

The catalysed reaction is enolpyruvoyl-2-diphospho-5'-guanosine + 7,8-didemethyl-8-hydroxy-5-deazariboflavin = dehydro coenzyme F420-0 + GMP + H(+). The protein operates within cofactor biosynthesis; coenzyme F420 biosynthesis. Functionally, catalyzes the transfer of the phosphoenolpyruvate moiety from enoylpyruvoyl-2-diphospho-5'-guanosine (EPPG) to 7,8-didemethyl-8-hydroxy-5-deazariboflavin (FO) with the formation of dehydro coenzyme F420-0 and GMP. The polypeptide is Phosphoenolpyruvate transferase (Kitasatospora aureofaciens (Streptomyces aureofaciens)).